Here is a 427-residue protein sequence, read N- to C-terminus: Adenylosuccinate synthetase (427 aa).

GTP-binding positions include 12 to 18 (GDEGKGK) and 40 to 42 (GHT). The active-site Proton acceptor is the aspartate 13. 2 residues coordinate Mg(2+): aspartate 13 and glycine 40. IMP contacts are provided by residues 13–16 (DEGK), 38–41 (NAGH), threonine 128, arginine 142, glutamine 223, threonine 238, and arginine 302. Catalysis depends on histidine 41, which acts as the Proton donor. 298–304 (VTTGRDR) provides a ligand contact to substrate. Residues arginine 304, 330 to 332 (KLD), and 412 to 414 (GVG) contribute to the GTP site.

The protein belongs to the adenylosuccinate synthetase family. In terms of assembly, homodimer. It depends on Mg(2+) as a cofactor.

Its subcellular location is the cytoplasm. It carries out the reaction IMP + L-aspartate + GTP = N(6)-(1,2-dicarboxyethyl)-AMP + GDP + phosphate + 2 H(+). It participates in purine metabolism; AMP biosynthesis via de novo pathway; AMP from IMP: step 1/2. Functionally, plays an important role in the de novo pathway of purine nucleotide biosynthesis. Catalyzes the first committed step in the biosynthesis of AMP from IMP. This is Adenylosuccinate synthetase from Streptomyces griseus subsp. griseus (strain JCM 4626 / CBS 651.72 / NBRC 13350 / KCC S-0626 / ISP 5235).